The chain runs to 283 residues: Bis(5'-nucleosyl)-tetraphosphatase, symmetrical (283 aa).

It belongs to the Ap4A hydrolase family.

It catalyses the reaction P(1),P(4)-bis(5'-adenosyl) tetraphosphate + H2O = 2 ADP + 2 H(+). Its function is as follows. Hydrolyzes diadenosine 5',5'''-P1,P4-tetraphosphate to yield ADP. The polypeptide is Bis(5'-nucleosyl)-tetraphosphatase, symmetrical (Pseudomonas fluorescens (strain SBW25)).